The sequence spans 595 residues: Beta-(1--&gt;2)glucan export ATP-binding/permease protein NdvA (595 aa).

The 281-residue stretch at 21-301 (SLLICSANVM…MSNFINLTIS (281 aa)) folds into the ABC transmembrane type-1 domain. Transmembrane regions (helical) follow at residues 22–42 (LLICSANVMLAIITIAEPILF), 55–75 (IIPTLTIWVCFGISHILAYVL), 129–149 (IWLDFMRQHLSTLVALFVLIP), 152–172 (FNMNWRLSIVLVVLAIIYVLI), and 248–268 (MASTISIVCVLLLGAFFVAKG). In terms of domain architecture, ABC transporter spans 335-569 (IQFHHVTYKF…GGRFYKLLKA (235 aa)). 368–375 (GPTGAGKT) lines the ATP pocket.

This sequence belongs to the ABC transporter superfamily. Beta-(1--&gt;2)glucan exporter (TC 3.A.1.108.1) family. As to quaternary structure, homodimer.

It is found in the cell inner membrane. It carries out the reaction [(1-&gt;2)-beta-D-glucosyl](n)(in) + ATP + H2O = [(1-&gt;2)-beta-D-glucosyl](n)(out) + ADP + phosphate + H(+). In terms of biological role, involved in beta-(1--&gt;2)glucan export. Transmembrane domains (TMD) form a pore in the inner membrane and the ATP-binding domain (NBD) is responsible for energy generation. The sequence is that of Beta-(1--&gt;2)glucan export ATP-binding/permease protein NdvA from Bartonella henselae (strain ATCC 49882 / DSM 28221 / CCUG 30454 / Houston 1) (Rochalimaea henselae).